We begin with the raw amino-acid sequence, 252 residues long: Small ribosomal subunit protein uS2 (252 aa).

A disordered region spans residues 231–252; it reads SVESTAQEQVEETAQEETAVEA. Over residues 239–252 the composition is skewed to acidic residues; it reads QVEETAQEETAVEA.

The protein belongs to the universal ribosomal protein uS2 family.

In Acetivibrio thermocellus (strain ATCC 27405 / DSM 1237 / JCM 9322 / NBRC 103400 / NCIMB 10682 / NRRL B-4536 / VPI 7372) (Clostridium thermocellum), this protein is Small ribosomal subunit protein uS2.